A 633-amino-acid chain; its full sequence is Probable extracellular metalloproteinase 3 (633 aa).

A signal peptide spans 1-18 (MHGLLLAGLLALPMNVLA). Positions 19–246 (HPAEQHASNV…VHNVVDYVAS (228 aa)) are excised as a propeptide. Asn410 carries an N-linked (GlcNAc...) asparagine glycan. His429 is a Zn(2+) binding site. Glu430 is a catalytic residue. Position 433 (His433) interacts with Zn(2+). N-linked (GlcNAc...) asparagine glycosylation is found at Asn480 and Asn622.

It belongs to the peptidase M36 family. The cofactor is Zn(2+).

Its subcellular location is the secreted. Functionally, secreted metalloproteinase probably acting as a virulence factor. This Trichophyton verrucosum (strain HKI 0517) protein is Probable extracellular metalloproteinase 3 (MEP3).